Consider the following 320-residue polypeptide: Cytochrome f (320 aa).

The N-terminal stretch at 1 to 35 (MQNRNTFSWIKEQMTRSISVSIMIYVITRTAISNA) is a signal peptide. The heme site is built by tyrosine 36, cysteine 56, cysteine 59, and histidine 60. Residues 286 to 306 (VQGLLFFLASVILAQIFLVLK) form a helical membrane-spanning segment.

This sequence belongs to the cytochrome f family. As to quaternary structure, the 4 large subunits of the cytochrome b6-f complex are cytochrome b6, subunit IV (17 kDa polypeptide, petD), cytochrome f and the Rieske protein, while the 4 small subunits are PetG, PetL, PetM and PetN. The complex functions as a dimer. Requires heme as cofactor.

It localises to the plastid. The protein resides in the chloroplast thylakoid membrane. Component of the cytochrome b6-f complex, which mediates electron transfer between photosystem II (PSII) and photosystem I (PSI), cyclic electron flow around PSI, and state transitions. The polypeptide is Cytochrome f (Platanus occidentalis (Sycamore)).